A 152-amino-acid polypeptide reads, in one-letter code: MDLELFDDDQLLDDKHHDLIKKLVAFCGKQLKLPENTEMSITLVGDDEIERINREYRETDRVTDVISFAIEEGEDDLPLLPGMAKNIGDLFIDPLTVRRHAEEYGHSFERELGYTVVHGFLHLNGYDHIKPEDEAVMIPLQKKILAAYGLTR.

Positions 118, 122, and 128 each coordinate Zn(2+).

This sequence belongs to the endoribonuclease YbeY family. Zn(2+) is required as a cofactor.

It is found in the cytoplasm. Functionally, single strand-specific metallo-endoribonuclease involved in late-stage 70S ribosome quality control and in maturation of the 3' terminus of the 16S rRNA. The sequence is that of Endoribonuclease YbeY from Lacticaseibacillus casei (strain BL23) (Lactobacillus casei).